A 32-amino-acid chain; its full sequence is Cytochrome b6-f complex subunit 7 (32 aa).

A helical transmembrane segment spans residues 5-25; that stretch reads IFTVAGVMWALVLTGLSVGFG.

Belongs to the PetM family. The 4 large subunits of the cytochrome b6-f complex are cytochrome b6, subunit IV (17 kDa polypeptide, PetD), cytochrome f and the Rieske protein, while the 4 small subunits are PetG, PetL, PetM and PetN. The complex functions as a dimer.

It localises to the plastid. The protein localises to the chloroplast thylakoid membrane. Functionally, component of the cytochrome b6-f complex, which mediates electron transfer between photosystem II (PSII) and photosystem I (PSI), cyclic electron flow around PSI, and state transitions. This chain is Cytochrome b6-f complex subunit 7, found in Emiliania huxleyi (Coccolithophore).